A 173-amino-acid polypeptide reads, in one-letter code: Crossover junction endodeoxyribonuclease RuvC (173 aa).

Residues aspartate 8, glutamate 67, and aspartate 139 contribute to the active site. 3 residues coordinate Mg(2+): aspartate 8, glutamate 67, and aspartate 139.

The protein belongs to the RuvC family. Homodimer which binds Holliday junction (HJ) DNA. The HJ becomes 2-fold symmetrical on binding to RuvC with unstacked arms; it has a different conformation from HJ DNA in complex with RuvA. In the full resolvosome a probable DNA-RuvA(4)-RuvB(12)-RuvC(2) complex forms which resolves the HJ. Requires Mg(2+) as cofactor.

The protein localises to the cytoplasm. The enzyme catalyses Endonucleolytic cleavage at a junction such as a reciprocal single-stranded crossover between two homologous DNA duplexes (Holliday junction).. In terms of biological role, the RuvA-RuvB-RuvC complex processes Holliday junction (HJ) DNA during genetic recombination and DNA repair. Endonuclease that resolves HJ intermediates. Cleaves cruciform DNA by making single-stranded nicks across the HJ at symmetrical positions within the homologous arms, yielding a 5'-phosphate and a 3'-hydroxyl group; requires a central core of homology in the junction. The consensus cleavage sequence is 5'-(A/T)TT(C/G)-3'. Cleavage occurs on the 3'-side of the TT dinucleotide at the point of strand exchange. HJ branch migration catalyzed by RuvA-RuvB allows RuvC to scan DNA until it finds its consensus sequence, where it cleaves and resolves the cruciform DNA. The polypeptide is Crossover junction endodeoxyribonuclease RuvC (Aliivibrio fischeri (strain ATCC 700601 / ES114) (Vibrio fischeri)).